Consider the following 251-residue polypeptide: ATP synthase delta chain, chloroplastic (251 aa).

A chloroplast-targeting transit peptide spans 1–64 (MASLQHTTAS…STGGALGARM (64 aa)).

It belongs to the ATPase delta chain family. As to quaternary structure, F-type ATPases have 2 components, CF(1) - the catalytic core - and CF(0) - the membrane proton channel. CF(1) has five subunits: alpha(3), beta(3), gamma(1), delta(1), epsilon(1). CF(0) has three main subunits: a, b and c.

The protein localises to the plastid. It is found in the chloroplast thylakoid membrane. This protein seems to be part of the stalk that links CF(0) to CF(1). It either transmits conformational changes from CF(0) into CF(1) or is implicated in proton conduction. The protein is ATP synthase delta chain, chloroplastic (ATPD) of Pisum sativum (Garden pea).